The chain runs to 475 residues: MASSLSPPEEASYHHRHTKRYTSSASSASSTTNGTVESSVSDFVKRPKISHPNYISSSEIESEFSHHDPDFARINNGSFGCCPSSILALQRDWQLRFLRQPDRFYFDELKPKISDSRSVIKRLINAEHDDEVSIVDNATTAAAIVLQQTAWAFREGRFDKGDAVVMLHYAYGSVKKSVEAYVTRSGGHVTEVQLPFPVISADEIIDRFRIGLESGKANGRRVRLALIDHVTSMPSVVIPIKELVKICRREGVDQVFVDAAHGIGCVDVDMKEIGADFYTSNLHKWFFAPPSVAFLYCRKSSNGGVADLHHPVVSNEYGNGLAVESSWVGTRDYSAQLVVPSILEFVNRFEGGIDGIKKRNHESVVEMGQMLVKSWGTQLGCPPEMCASMIMVGLPVCLGVSSESDVLKLRTFLREKFRIEIPIYFRPPGDGEIDPITGYVRISFQVYNKPEDYHRLRDAINGLVRDGFKCTSLSC.

The transit peptide at 1 to 24 (MASSLSPPEEASYHHRHTKRYTSS) directs the protein to the chloroplast. The disordered stretch occupies residues 1 to 40 (MASSLSPPEEASYHHRHTKRYTSSASSASSTTNGTVESSV). Over residues 22-32 (TSSASSASSTT) the composition is skewed to low complexity. N6-(pyridoxal phosphate)lysine is present on lysine 284.

The protein belongs to the class-V pyridoxal-phosphate-dependent aminotransferase family. As to quaternary structure, interacts in vitro with QS.

It localises to the plastid. It is found in the chloroplast. Functionally, may catalyze the production of hydrogen sulfide (H2S) from cysteine. The sequence is that of Probable L-cysteine desulfhydrase, chloroplastic from Arabidopsis thaliana (Mouse-ear cress).